The chain runs to 264 residues: tRNA pseudouridine synthase A (264 aa).

The Nucleophile role is filled by aspartate 51. Substrate is bound at residue tyrosine 109.

This sequence belongs to the tRNA pseudouridine synthase TruA family. In terms of assembly, homodimer.

The catalysed reaction is uridine(38/39/40) in tRNA = pseudouridine(38/39/40) in tRNA. Its function is as follows. Formation of pseudouridine at positions 38, 39 and 40 in the anticodon stem and loop of transfer RNAs. The chain is tRNA pseudouridine synthase A from Vibrio cholerae serotype O1 (strain ATCC 39541 / Classical Ogawa 395 / O395).